Here is a 118-residue protein sequence, read N- to C-terminus: Class I hydrophobin 1 (118 aa).

The signal sequence occupies residues 1 to 20; the sequence is MFARLSTALLAFTLATAVVA. Intrachain disulfides connect C34–C97, C41–C91, C42–C77, and C98–C111. The N-linked (GlcNAc...) asparagine glycan is linked to N54. The N-linked (GlcNAc...) asparagine glycan is linked to N115.

It belongs to the fungal hydrophobin family. As to quaternary structure, self-assembles to form functional amyloid fibrils called rodlets. Self-assembly into fibrillar rodlets occurs spontaneously at hydrophobic:hydrophilic interfaces and the rodlets further associate laterally to form amphipathic monolayers.

The protein localises to the secreted. It localises to the cell wall. Its function is as follows. Aerial growth, conidiation, and dispersal of filamentous fungi in the environment rely upon a capability of their secreting small amphipathic proteins called hydrophobins (HPBs) with low sequence identity. Class I can self-assemble into an outermost layer of rodlet bundles on aerial cell surfaces, conferring cellular hydrophobicity that supports fungal growth, development and dispersal; whereas Class II form highly ordered films at water-air interfaces through intermolecular interactions but contribute nothing to the rodlet structure. This Coprinopsis cinerea (strain Okayama-7 / 130 / ATCC MYA-4618 / FGSC 9003) (Inky cap fungus) protein is Class I hydrophobin 1.